Consider the following 664-residue polypeptide: Probable LRR receptor-like serine/threonine-protein kinase At1g63430 (664 aa).

An N-terminal signal peptide occupies residues 1 to 22 (MRSKYFCSLALVLGLFFVSCDG). Over 23 to 288 (FASNEVQALR…KHHRASKPKW (266 aa)) the chain is Extracellular. An N-linked (GlcNAc...) asparagine glycan is attached at N75. LRR repeat units follow at residues 94-116 (YLQE…IGNL), 118-140 (NLKI…IGSL), 142-165 (GIMI…GNLK), and 166-178 (YLRE…NRLQ). N197 carries N-linked (GlcNAc...) asparagine glycosylation. A helical membrane pass occupies residues 289–309 (LLALEIVTGSMVGLLLLVALF). The Cytoplasmic portion of the chain corresponds to 310-664 (SAVHRWNNRS…LAWAELALDS (355 aa)). Residues 360 to 642 (EDFSNIIGLS…ELCETLESRI (283 aa)) enclose the Protein kinase domain.

It belongs to the protein kinase superfamily. Ser/Thr protein kinase family.

It is found in the cell membrane. It carries out the reaction L-seryl-[protein] + ATP = O-phospho-L-seryl-[protein] + ADP + H(+). It catalyses the reaction L-threonyl-[protein] + ATP = O-phospho-L-threonyl-[protein] + ADP + H(+). In Arabidopsis thaliana (Mouse-ear cress), this protein is Probable LRR receptor-like serine/threonine-protein kinase At1g63430.